The following is an 815-amino-acid chain: Probable oligoxyloglucan-reducing end-specific xyloglucanase (815 aa).

Residues 1 to 19 (MKFWLQQLGLAVLCASSAA) form the signal peptide. Catalysis depends on D58, which acts as the Nucleophile. N113 is a glycosylation site (N-linked (GlcNAc...) asparagine). The stretch at 118–128 (FVSNDRGATFT) is one BNR 1 repeat. N180 carries an N-linked (GlcNAc...) asparagine glycan. One copy of the BNR 2 repeat lies at 218–228 (YYTTDGGKNWE). N246, N290, and N304 each carry an N-linked (GlcNAc...) asparagine glycan. The BNR 3 repeat unit spans residues 351–361 (YLSRDGGKTWK). N-linked (GlcNAc...) asparagine glycosylation is present at N387. D489 serves as the catalytic Proton donor. The stretch at 545-555 (YSTDGGSEWTK) is one BNR 4 repeat. N-linked (GlcNAc...) asparagine glycans are attached at residues N564 and N603. Residues 649-658 (YVSTDGGLSY) form a BNR 5 repeat. N-linked (GlcNAc...) asparagine glycosylation occurs at N662. BNR repeat units lie at residues 696 to 706 (YHTTDFGKRWK) and 749 to 759 (YRSDDNGSTWD). N754 is a glycosylation site (N-linked (GlcNAc...) asparagine).

Belongs to the glycosyl hydrolase 74 family.

It localises to the secreted. It carries out the reaction Hydrolysis of cellobiose from the reducing end of xyloglucans consisting of a beta-(1-&gt;4)-linked glucan carrying alpha-D-xylosyl groups on O-6 of the glucose residues. To be a substrate, the first residue must be unsubstituted, the second residue may bear a xylosyl group, whether further glycosylated or not, and the third residue, which becomes the new terminus by the action of the enzyme, is preferably xylosylated, but this xylose residue must not be further substituted.. In terms of biological role, oligoxyloglucan-reducing end-specific xyloglucanase involved in degradation of xyloglucans. Releases the first two glycosyl segments from oligoxyloglucans. Active against cotton xyloglucan, tamarind xyloglucan and tamarind xyloglucan oligomers. This chain is Probable oligoxyloglucan-reducing end-specific xyloglucanase (xgcA), found in Neosartorya fischeri (strain ATCC 1020 / DSM 3700 / CBS 544.65 / FGSC A1164 / JCM 1740 / NRRL 181 / WB 181) (Aspergillus fischerianus).